We begin with the raw amino-acid sequence, 491 residues long: 2,3-bisphosphoglycerate-independent phosphoglycerate mutase (491 aa).

2 residues coordinate Mn(2+): Asp11 and Ser61. The active-site Phosphoserine intermediate is Ser61. Residues His118, 147–148 (RD), Arg177, Arg183, 247–250 (RNDR), and Lys320 each bind substrate. Mn(2+) is bound by residues Asp386, His390, Asp427, His428, and His445.

It belongs to the BPG-independent phosphoglycerate mutase family. As to quaternary structure, monomer. It depends on Mn(2+) as a cofactor.

The enzyme catalyses (2R)-2-phosphoglycerate = (2R)-3-phosphoglycerate. It participates in carbohydrate degradation; glycolysis; pyruvate from D-glyceraldehyde 3-phosphate: step 3/5. Its function is as follows. Catalyzes the interconversion of 2-phosphoglycerate and 3-phosphoglycerate. In Helicobacter pylori (strain J99 / ATCC 700824) (Campylobacter pylori J99), this protein is 2,3-bisphosphoglycerate-independent phosphoglycerate mutase.